The primary structure comprises 120 residues: Internal scaffolding protein B (120 aa).

Residues 1 to 23 (MEQLTKNQAVATSQEAVQNQNEP) show a composition bias toward polar residues. A disordered region spans residues 1–64 (MEQLTKNQAV…PDIEAERKKR (64 aa)). 2 stretches are compositionally biased toward basic and acidic residues: residues 24–36 (QLRD…DKSV) and 48–64 (LRRD…RKKR).

The protein belongs to the microviridae B protein family. In terms of assembly, component of the procapsid complex composed of 60 copies of the internally located B, 240 copies of the external scaffolding protein D, 60 copies of each of the viral structural proteins F and G proteins, and 12 copies of H. Post-translationally, the proteolytic cleavage of the internal scaffolding protein B releases the scaffold protein in order to continue virion assembly.

The protein localises to the host cytoplasm. Participates in the assembly of the viral procapsid in the cytoplasm. Forms first a 12S pre-assembly complex with protein H, and F and G pentamers, then twelve 12S complexes are joined by the D protein to form the procapsid. Internal scaffold protein B is released from the procapsid upon genome packaging. Autoproteolytic activity cleaves protein B and probably facilitates its removal through the pores of the procapsid. The sequence is that of Internal scaffolding protein B (B) from Enterobacteria phage phiX174 (Isolate Sanger).